The following is a 2555-amino-acid chain: Plipastatin synthase subunit C (2555 aa).

Positions I7–D306 are condensation 1. Residues T491 to V894 are adenylation 1. A Carrier 1 domain is found at A967 to T1042. O-(pantetheine 4'-phosphoryl)serine is present on S1002. Residues K1054–E1344 are condensation 2. An adenylation 2 region spans residues T1532 to V1927. Positions P2003–E2077 constitute a Carrier 2 domain. The residue at position 2038 (S2038) is an O-(pantetheine 4'-phosphoryl)serine. The epimerization 3 stretch occupies residues I2085 to I2548.

This sequence belongs to the ATP-dependent AMP-binding enzyme family. The cofactor is pantetheine 4'-phosphate.

Functionally, this protein is a multifunctional enzyme, able to activate and polymerize the amino acids Glu and Ala/Val as part of the biosynthesis of the lipopeptide antibiotic plipastatin. The Ala/Val residue is further epimerized to the D-isomer form. The activation sites for these amino acids consist of individual domains. The protein is Plipastatin synthase subunit C (ppsC) of Bacillus subtilis (strain 168).